Reading from the N-terminus, the 339-residue chain is Ferredoxin--NADP reductase (339 aa).

The FAD site is built by Glu35, Gln43, Tyr48, Val88, Phe122, Asp287, and Ser327.

This sequence belongs to the ferredoxin--NADP reductase type 2 family. Homodimer. It depends on FAD as a cofactor.

It catalyses the reaction 2 reduced [2Fe-2S]-[ferredoxin] + NADP(+) + H(+) = 2 oxidized [2Fe-2S]-[ferredoxin] + NADPH. This chain is Ferredoxin--NADP reductase, found in Leuconostoc citreum (strain KM20).